The following is a 473-amino-acid chain: Ribulose bisphosphate carboxylase large chain 1 (473 aa).

Positions 116 and 166 each coordinate substrate. Residue K168 is the Proton acceptor of the active site. K170 contributes to the substrate binding site. Mg(2+)-binding residues include K194, D196, and E197. K194 carries the post-translational modification N6-carboxylysine. H287 (proton acceptor) is an active-site residue. The substrate site is built by R288, H320, and S372.

It belongs to the RuBisCO large chain family. Type I subfamily. Heterohexadecamer of 8 large chains and 8 small chains. Mg(2+) serves as cofactor.

It catalyses the reaction 2 (2R)-3-phosphoglycerate + 2 H(+) = D-ribulose 1,5-bisphosphate + CO2 + H2O. The catalysed reaction is D-ribulose 1,5-bisphosphate + O2 = 2-phosphoglycolate + (2R)-3-phosphoglycerate + 2 H(+). In terms of biological role, ruBisCO catalyzes two reactions: the carboxylation of D-ribulose 1,5-bisphosphate, the primary event in carbon dioxide fixation, as well as the oxidative fragmentation of the pentose substrate. Both reactions occur simultaneously and in competition at the same active site. This chain is Ribulose bisphosphate carboxylase large chain 1, found in Acidithiobacillus ferrooxidans (strain ATCC 23270 / DSM 14882 / CIP 104768 / NCIMB 8455) (Ferrobacillus ferrooxidans (strain ATCC 23270)).